Reading from the N-terminus, the 102-residue chain is Putative RNA-binding protein RbpA (102 aa).

In terms of domain architecture, RRM spans 2 to 79 (SIYVGNLSYE…RDLKVNKAKP (78 aa)). The span at 73 to 84 (KVNKAKPREDRG) shows a compositional bias: basic and acidic residues. Residues 73–102 (KVNKAKPREDRGPSGGNRGGYGGGGGRNRY) are disordered. Residues 85–102 (PSGGNRGGYGGGGGRNRY) are compositionally biased toward gly residues.

In Nostoc sp. (strain PCC 7120 / SAG 25.82 / UTEX 2576), this protein is Putative RNA-binding protein RbpA (rbpA).